The chain runs to 125 residues: Multifunctional methyltransferase subunit TRM112-like protein (125 aa).

Residues 2 to 119 (RLLTHNLLSS…SRGIPNMLLS (118 aa)) enclose the TRM112 domain. Position 119 is a phosphoserine (serine 119).

It belongs to the TRM112 family. Part of the heterodimeric BUD23-TRM112 methyltransferase complex; this heterodimerization is necessary for the metabolic stability and activity of the catalytic subunit BUD23. Part of the heterodimeric N6AMT1-TRM112 methyltransferase complex; this heterodimerization is necessary for S-adenosyl-L-methionine-binding to N6AMT1/HEMK2. Part of the heterodimeric ALKBH8-TRM112 methyltransferase complex. Part of the heterodimeric METTL5-TRM112 methyltransferase complex; this heterodimerization is necessary for the stability of the catalytic subunit METTL5. Part of the heterodimeric THUMPD3-TRM112 methyltransferase complex; this complex forms an active tRNA methyltransferase, where TRMT112 acts as an activator of the catalytic subunit THUMPD3. Part of the heterodimeric THUMPD2-TRM112 methyltransferase complex; this complex forms an active tRNA methyltransferase, where TRMT112 acts as an activator of the catalytic subunit THUMPD2. Part of the heterodimeric TRMT11-TRM112 methyltransferase complex; this complex forms an active tRNA methyltransferase, where TRMT112 acts as an activator of the catalytic subunit TRMT11.

Its subcellular location is the nucleus. It is found in the nucleoplasm. The protein resides in the cytoplasm. It localises to the perinuclear region. In terms of biological role, acts as an activator of both rRNA/tRNA and protein methyltransferases. Together with methyltransferase BUD23, methylates the N(7) position of a guanine in 18S rRNA. The heterodimer with HEMK2/N6AMT1 catalyzes N5-methylation of ETF1 on 'Gln-185', using S-adenosyl L-methionine as methyl donor. The heterodimer with ALKBH8 catalyzes the methylation of 5-carboxymethyl uridine to 5-methylcarboxymethyl uridine at the wobble position of the anticodon loop in target tRNA species. Together with methyltransferase THUMPD3, catalyzes the formation of N(2)-methylguanosine at position 6 in a broad range of tRNA substrates and at position 7 of tRNA(Trp). Involved in the pre-rRNA processing steps leading to small-subunit rRNA production. Together with methyltransferase METTL5, specifically methylates the 6th position of adenine in position 1832 of 18S rRNA. The polypeptide is Multifunctional methyltransferase subunit TRM112-like protein (TRMT112) (Bos taurus (Bovine)).